The following is a 312-amino-acid chain: Malate dehydrogenase (312 aa).

NAD(+) contacts are provided by residues 7 to 13 (GAAGGIG) and Asp34. Substrate is bound by residues Arg81 and Arg87. NAD(+)-binding positions include Asn94 and 117–119 (ITN). Asn119 and Arg153 together coordinate substrate. His177 (proton acceptor) is an active-site residue. Met227 serves as a coordination point for NAD(+).

This sequence belongs to the LDH/MDH superfamily. MDH type 1 family. As to quaternary structure, homodimer.

The catalysed reaction is (S)-malate + NAD(+) = oxaloacetate + NADH + H(+). In terms of biological role, catalyzes the reversible oxidation of malate to oxaloacetate. The sequence is that of Malate dehydrogenase from Escherichia coli O7:K1 (strain IAI39 / ExPEC).